Here is a 334-residue protein sequence, read N- to C-terminus: Putative lysine N-acyltransferase C17G9.06c (334 aa).

Histidine 248 contacts substrate. The active-site Proton acceptor is glutamate 286.

The protein belongs to the lysine N-acyltransferase mbtK family.

Its subcellular location is the cytoplasm. The protein resides in the nucleus. This Schizosaccharomyces pombe (strain 972 / ATCC 24843) (Fission yeast) protein is Putative lysine N-acyltransferase C17G9.06c.